Here is a 214-residue protein sequence, read N- to C-terminus: tRNA (guanine-N(7)-)-methyltransferase (214 aa).

S-adenosyl-L-methionine contacts are provided by D35, E60, N87, and D113. The active site involves D113. K117 and D149 together coordinate substrate.

It belongs to the class I-like SAM-binding methyltransferase superfamily. TrmB family.

It carries out the reaction guanosine(46) in tRNA + S-adenosyl-L-methionine = N(7)-methylguanosine(46) in tRNA + S-adenosyl-L-homocysteine. Its pathway is tRNA modification; N(7)-methylguanine-tRNA biosynthesis. Its function is as follows. Catalyzes the formation of N(7)-methylguanine at position 46 (m7G46) in tRNA. The sequence is that of tRNA (guanine-N(7)-)-methyltransferase from Prochlorococcus marinus (strain NATL2A).